We begin with the raw amino-acid sequence, 64 residues long: MPKAKTHSGASKRFRRTGTGKIVRQKTNRRHLLEHKPTTRTRRLEGRTTVSANDTKRVNSLLNG.

2 disordered regions span residues 1 to 22 (MPKAKTHSGASKRFRRTGTGKI) and 34 to 64 (EHKPTTRTRRLEGRTTVSANDTKRVNSLLNG). Positions 34-46 (EHKPTTRTRRLEG) are enriched in basic and acidic residues. Over residues 50-64 (VSANDTKRVNSLLNG) the composition is skewed to polar residues.

It belongs to the bacterial ribosomal protein bL35 family.

In Mycolicibacterium paratuberculosis (strain ATCC BAA-968 / K-10) (Mycobacterium paratuberculosis), this protein is Large ribosomal subunit protein bL35.